Consider the following 234-residue polypeptide: Chalcone--flavanone isomerase 2 (234 aa).

3 residues coordinate substrate: threonine 50, asparagine 115, and serine 192.

The protein belongs to the chalcone isomerase family.

It carries out the reaction a chalcone = a flavanone.. Its pathway is secondary metabolite biosynthesis; flavonoid biosynthesis. Functionally, catalyzes the intramolecular cyclization of bicyclic chalcones into tricyclic (S)-flavanones. Responsible for the isomerization of 4,2',4',6'-tetrahydroxychalcone (also termed chalcone) into naringenin. This chain is Chalcone--flavanone isomerase 2 (CHI2), found in Vitis vinifera (Grape).